The primary structure comprises 166 residues: Phosphodiesterase MJ0936 (166 aa).

Mn(2+)-binding residues include Asp8, His10, Asp36, Asn59, His97, His120, and His122. 7 residues coordinate Ni(2+): Asp8, His10, Asp36, Asn59, His97, His120, and His122.

Belongs to the metallophosphoesterase superfamily. YfcE family. In terms of assembly, monomer. It depends on Ni(2+) as a cofactor. Requires Mn(2+) as cofactor.

With respect to regulation, competitively inhibited by phosphate. Functionally, shows phosphodiesterase activity. Hydrolyzes phosphodiesters bonds in the artificial chromogenic substrates bis-p-nitrophenyl phosphate (bis-pNPP), and less efficiently thymidine 5'-monophosphate p-nitrophenyl ester (pNP-TMP) and p-nitrophenylphosphorylcholine (pNPPC). No catalytic activity was found toward cAMP or cGMP, nucleotides or phospholipase substrates such as phosphatidylcholine. The physiological substrate is unknown. This chain is Phosphodiesterase MJ0936, found in Methanocaldococcus jannaschii (strain ATCC 43067 / DSM 2661 / JAL-1 / JCM 10045 / NBRC 100440) (Methanococcus jannaschii).